An 806-amino-acid polypeptide reads, in one-letter code: Acetyl-CoA decarbonylase/synthase complex subunit alpha 1 (806 aa).

Positions 73, 76, 77, 79, 84, and 94 each coordinate [4Fe-4S] cluster. His-117 is a CO binding site. [Ni-4Fe-4S] cluster-binding residues include His-250, Cys-278, and Cys-323. 4Fe-4S ferredoxin-type domains lie at 407–436 and 446–475; these read DEEFADWVAKCADCGACMIACPEELDIPEA and SYLEELHDQCIGCRRCEQVCKKEIPILNII. [4Fe-4S] cluster contacts are provided by Cys-417, Cys-420, Cys-423, Cys-427, Cys-455, Cys-458, Cys-461, and Cys-465. Positions 523, 552, and 587 each coordinate [Ni-4Fe-4S] cluster.

The protein belongs to the Ni-containing carbon monoxide dehydrogenase family. Heterotetramer of two alpha and two epsilon subunits. The ACDS complex is made up of alpha, epsilon, beta, gamma and delta subunits with a probable stoichiometry of (alpha(2)epsilon(2))(4)-beta(8)-(gamma(1)delta(1))(8). [4Fe-4S] cluster is required as a cofactor. [Ni-4Fe-4S] cluster serves as cofactor.

It carries out the reaction CO + 2 oxidized [2Fe-2S]-[ferredoxin] + H2O = 2 reduced [2Fe-2S]-[ferredoxin] + CO2 + 2 H(+). The protein operates within one-carbon metabolism; methanogenesis from acetate. In terms of biological role, part of the ACDS complex that catalyzes the reversible cleavage of acetyl-CoA, allowing growth on acetate as sole source of carbon and energy. The alpha-epsilon subcomponent functions as a carbon monoxide dehydrogenase. This chain is Acetyl-CoA decarbonylase/synthase complex subunit alpha 1, found in Methanosarcina acetivorans (strain ATCC 35395 / DSM 2834 / JCM 12185 / C2A).